The following is a 712-amino-acid chain: Dipeptidyl-peptidase 7 (712 aa).

The first 23 residues, 1–23, serve as a signal peptide directing secretion; sequence MQMKLKSILLGAALLLGASGVAK. Histidine 89 acts as the Charge relay system in catalysis. Residues 136 to 173 are a coiled coil; that stretch reads TDKVEGQLKGITDEMERLRKAQEVCQELAKKENADENQ. Residues aspartate 225 and serine 648 each act as charge relay system in the active site.

It belongs to the peptidase S46 family.

Its subcellular location is the cell outer membrane. With respect to regulation, is inhibited in vitro by typical serine protease inhibitors like diisopropyl fluorophosphate, Pefablock, and 3,4-dichloroisocoumarin, but not by typical cysteine class inhibitors such as E-64 or iododoacetic acid. Functionally, catalyzes the removal of dipeptides from the N-terminus of oligopeptides. Shows a broad specificity for both aliphatic and aromatic residues in the P1 position, with glycine or proline being not acceptable in this position. Most potently cleaves the synthetic substrate Met-Leu-methylcoumaryl-7-amide (Met-Leu-MCA), Leu-Arg-MCA and Lys-Ala-MCA to a lesser extent. Is likely involved in amino acid metabolism and bacterial growth of asaccharolytic P.gingivalis, that utilizes amino acids from extracellular proteinaceous nutrients as energy and carbon sources. This Porphyromonas gingivalis (strain ATCC 33277 / DSM 20709 / CIP 103683 / JCM 12257 / NCTC 11834 / 2561) protein is Dipeptidyl-peptidase 7.